The following is a 133-amino-acid chain: Ribosomal silencing factor RsfS (133 aa).

Belongs to the Iojap/RsfS family. In terms of assembly, interacts with ribosomal protein uL14 (rplN).

It localises to the cytoplasm. Its function is as follows. Functions as a ribosomal silencing factor. Interacts with ribosomal protein uL14 (rplN), blocking formation of intersubunit bridge B8. Prevents association of the 30S and 50S ribosomal subunits and the formation of functional ribosomes, thus repressing translation. The polypeptide is Ribosomal silencing factor RsfS (Zymomonas mobilis subsp. mobilis (strain ATCC 31821 / ZM4 / CP4)).